The following is a 369-amino-acid chain: uncharacterized protein (369 aa).

This is an uncharacterized protein from Haloarcula marismortui (strain ATCC 43049 / DSM 3752 / JCM 8966 / VKM B-1809) (Halobacterium marismortui).